A 440-amino-acid polypeptide reads, in one-letter code: Ribosomal protein uS12 methylthiotransferase RimO (440 aa).

The region spanning 8-125 (LRCHAISLGC…WNEQILLALN (118 aa)) is the MTTase N-terminal domain. Residues Cys-17, Cys-52, Cys-87, Cys-152, Cys-156, and Cys-159 each contribute to the [4Fe-4S] cluster site. The region spanning 138 to 368 (TTGKSYAWLK…MEIQLKISEK (231 aa)) is the Radical SAM core domain. One can recognise a TRAM domain in the interval 371 to 439 (KNFVGKRLSL…SYDLVALADS (69 aa)).

Belongs to the methylthiotransferase family. RimO subfamily. The cofactor is [4Fe-4S] cluster.

It localises to the cytoplasm. It catalyses the reaction L-aspartate(89)-[ribosomal protein uS12]-hydrogen + (sulfur carrier)-SH + AH2 + 2 S-adenosyl-L-methionine = 3-methylsulfanyl-L-aspartate(89)-[ribosomal protein uS12]-hydrogen + (sulfur carrier)-H + 5'-deoxyadenosine + L-methionine + A + S-adenosyl-L-homocysteine + 2 H(+). Its function is as follows. Catalyzes the methylthiolation of an aspartic acid residue of ribosomal protein uS12. The chain is Ribosomal protein uS12 methylthiotransferase RimO from Lawsonia intracellularis (strain PHE/MN1-00).